A 95-amino-acid chain; its full sequence is UPF0213 protein YPK_3712 (95 aa).

The GIY-YIG domain maps to 4 to 79 (SLWHLYLLRT…KQLSKQQKEK (76 aa)).

This sequence belongs to the UPF0213 family.

This chain is UPF0213 protein YPK_3712, found in Yersinia pseudotuberculosis serotype O:3 (strain YPIII).